Reading from the N-terminus, the 215-residue chain is Ribose-5-phosphate isomerase A (215 aa).

Substrate contacts are provided by residues 26 to 29 (TGST), 79 to 82 (DGAD), and 92 to 95 (KGGG). Glutamate 101 functions as the Proton acceptor in the catalytic mechanism. Lysine 119 contributes to the substrate binding site.

The protein belongs to the ribose 5-phosphate isomerase family. Homodimer.

The enzyme catalyses aldehydo-D-ribose 5-phosphate = D-ribulose 5-phosphate. The protein operates within carbohydrate degradation; pentose phosphate pathway; D-ribose 5-phosphate from D-ribulose 5-phosphate (non-oxidative stage): step 1/1. In terms of biological role, catalyzes the reversible conversion of ribose-5-phosphate to ribulose 5-phosphate. The chain is Ribose-5-phosphate isomerase A from Xanthomonas euvesicatoria pv. vesicatoria (strain 85-10) (Xanthomonas campestris pv. vesicatoria).